The primary structure comprises 353 residues: Phosphate acyltransferase (353 aa).

The protein belongs to the PlsX family. As to quaternary structure, homodimer. Probably interacts with PlsY.

It localises to the cytoplasm. It catalyses the reaction a fatty acyl-[ACP] + phosphate = an acyl phosphate + holo-[ACP]. It functions in the pathway lipid metabolism; phospholipid metabolism. Its function is as follows. Catalyzes the reversible formation of acyl-phosphate (acyl-PO(4)) from acyl-[acyl-carrier-protein] (acyl-ACP). This enzyme utilizes acyl-ACP as fatty acyl donor, but not acyl-CoA. The protein is Phosphate acyltransferase of Rhodopseudomonas palustris (strain BisB5).